Consider the following 445-residue polypeptide: Phosphoglucosamine mutase (445 aa).

Ser102 acts as the Phosphoserine intermediate in catalysis. Mg(2+)-binding residues include Ser102, Asp241, Asp243, and Asp245. Ser102 carries the phosphoserine modification.

Belongs to the phosphohexose mutase family. Mg(2+) is required as a cofactor. Post-translationally, activated by phosphorylation.

It carries out the reaction alpha-D-glucosamine 1-phosphate = D-glucosamine 6-phosphate. In terms of biological role, catalyzes the conversion of glucosamine-6-phosphate to glucosamine-1-phosphate. The sequence is that of Phosphoglucosamine mutase from Aliivibrio salmonicida (strain LFI1238) (Vibrio salmonicida (strain LFI1238)).